We begin with the raw amino-acid sequence, 54 residues long: 2-aminomuconate deaminase (54 aa).

Homohexamer.

The catalysed reaction is (2Z,4E)-2-aminomuconate + H2O = (3E)-2-oxohex-3-enedioate + NH4(+). It functions in the pathway xenobiotic degradation; nitrobenzene degradation. Converts 2-aminomuconate to 4-oxalocrotonate, an intermediate step in the biodegradation of nitrobenzene. In Ectopseudomonas oleovorans (Pseudomonas oleovorans), this protein is 2-aminomuconate deaminase.